The primary structure comprises 268 residues: Mediator of RNA polymerase II transcription subunit 18 (268 aa).

The segment at 91 to 112 (APASPVADQDAHMSGTDEKSSV) is disordered. Residues 99 to 112 (QDAHMSGTDEKSSV) are compositionally biased toward basic and acidic residues.

The protein belongs to the Mediator complex subunit 18 family. Component of the Mediator complex.

It localises to the nucleus. Its function is as follows. Component of the Mediator complex, a coactivator involved in the regulated transcription of nearly all RNA polymerase II-dependent genes. Mediator functions as a bridge to convey information from gene-specific regulatory proteins to the basal RNA polymerase II transcription machinery. Mediator is recruited to promoters by direct interactions with regulatory proteins and serves as a scaffold for the assembly of a functional preinitiation complex with RNA polymerase II and the general transcription factors. The protein is Mediator of RNA polymerase II transcription subunit 18 (srb5) of Aspergillus fumigatus (strain ATCC MYA-4609 / CBS 101355 / FGSC A1100 / Af293) (Neosartorya fumigata).